A 123-amino-acid chain; its full sequence is Large ribosomal subunit protein bL12 (123 aa).

It belongs to the bacterial ribosomal protein bL12 family. As to quaternary structure, homodimer. Part of the ribosomal stalk of the 50S ribosomal subunit. Forms a multimeric L10(L12)X complex, where L10 forms an elongated spine to which 2 to 4 L12 dimers bind in a sequential fashion. Binds GTP-bound translation factors.

Functionally, forms part of the ribosomal stalk which helps the ribosome interact with GTP-bound translation factors. Is thus essential for accurate translation. The polypeptide is Large ribosomal subunit protein bL12 (Shewanella sp. (strain MR-4)).